Reading from the N-terminus, the 540-residue chain is Peptide chain release factor 3 (540 aa).

The tr-type G domain maps to 14-283 (NQRRNFAIIS…AFLDYALKPI (270 aa)). GTP is bound by residues 23 to 30 (SHPDAGKT), 91 to 95 (DTPGH), and 145 to 148 (NKLD).

Belongs to the TRAFAC class translation factor GTPase superfamily. Classic translation factor GTPase family. PrfC subfamily.

The protein resides in the cytoplasm. In terms of biological role, increases the formation of ribosomal termination complexes and stimulates activities of RF-1 and RF-2. It binds guanine nucleotides and has strong preference for UGA stop codons. It may interact directly with the ribosome. The stimulation of RF-1 and RF-2 is significantly reduced by GTP and GDP, but not by GMP. This is Peptide chain release factor 3 from Gloeothece citriformis (strain PCC 7424) (Cyanothece sp. (strain PCC 7424)).